We begin with the raw amino-acid sequence, 482 residues long: Regulator of nonsense transcripts UPF3 (482 aa).

A binds to UPF2 region spans residues 9–14 (KVVVRH). The necessary for interaction with UPF2 stretch occupies residues 9–219 (KVVVRHLPPS…EKESSKNVPR (211 aa)). The sufficient for association with EJC core stretch occupies residues 53 to 482 (YSRAYVSFKA…MWIQKPSSGT (430 aa)). Residues 173–482 (PQGLSDIRRG…MWIQKPSSGT (310 aa)) form a disordered region. Basic and acidic residues predominate over residues 201-214 (RNSEKKKYVEKESS). Composition is skewed to polar residues over residues 223 to 239 (ADVSSSKPDYRQSNSSG), 292 to 308 (DTNLSRNSTDSRQNQKS), and 325 to 336 (RPSQSSTFVQSE). 2 stretches are compositionally biased toward basic and acidic residues: residues 337-348 (QRVEPSEAENYK) and 370-394 (EKQERRTRNKDRPDRVMWAPRRDGS). A compositionally biased stretch (polar residues) spans 414–435 (SQRSGEVVNSSGGHTLENGSAR).

Belongs to the RENT3 family. In terms of assembly, found in a post-splicing messenger ribonucleoprotein (mRNP) complex. Associates with the exon junction complex (EJC). Interacts with CPL1/FRY2.

It localises to the nucleus. The protein localises to the nucleolus. Its subcellular location is the cytoplasm. In terms of biological role, recruits UPF2 at the cytoplasmic side of the nuclear envelope and the subsequent formation of an UPF1-UPF2-UPF3 surveillance complex (including UPF1 bound to release factors at the stalled ribosome) is believed to activate NMD. Binds spliced mRNA upstream of exon-exon junctions. Involved in nonsense-mediated decay (NMD) of mRNAs containing premature stop codons (premature termination codon PTC) by associating with the nuclear exon junction complex (EJC) and serving as link between the EJC core and NMD machinery. Eliminates the production of nonsense-containing RNAs (ncRNAs). Required for plant development and adaptation to environmental stresses, including plant defense and response to wounding. The chain is Regulator of nonsense transcripts UPF3 from Arabidopsis thaliana (Mouse-ear cress).